A 431-amino-acid polypeptide reads, in one-letter code: Keratin, type I cytoskeletal 40 (431 aa).

The interval M1 to E89 is head. Residues E89 to L400 enclose the IF rod domain. The segment at K90–Q124 is coil 1A. The segment at C125 to D135 is linker 1. The coil 1B stretch occupies residues Y136–E236. The segment at Q237–L252 is linker 12. Residues D253–E396 form a coil 2 region. The segment at D397–L431 is tail.

Belongs to the intermediate filament family. Heterotetramer of two type I and two type II keratins. As to expression, expressed in skin and scalp. Also very weakly expressed in tongue, breast, colon and small intestine. In the hair follicle, it is specifically present in the upper hair cuticle. Not present in the upper cortex (at protein level).

Functionally, may play a role in late hair differentiation. This Homo sapiens (Human) protein is Keratin, type I cytoskeletal 40 (KRT40).